The sequence spans 792 residues: Phenylalanine--tRNA ligase beta subunit (792 aa).

A tRNA-binding domain is found at 39-147 (GEALDLILVA…EDAPIGTPLA (109 aa)). The B5 domain maps to 400-475 (PAPASILLRR…RIRGYEHLPT (76 aa)). Mg(2+)-binding residues include Asp453, Asp459, Glu462, and Glu463. The FDX-ACB domain maps to 698–791 (SRFPFVRRDL…IQQRHDVRIR (94 aa)).

Belongs to the phenylalanyl-tRNA synthetase beta subunit family. Type 1 subfamily. As to quaternary structure, tetramer of two alpha and two beta subunits. Requires Mg(2+) as cofactor.

It localises to the cytoplasm. It catalyses the reaction tRNA(Phe) + L-phenylalanine + ATP = L-phenylalanyl-tRNA(Phe) + AMP + diphosphate + H(+). This is Phenylalanine--tRNA ligase beta subunit from Xylella fastidiosa (strain Temecula1 / ATCC 700964).